Here is a 260-residue protein sequence, read N- to C-terminus: Fructose import ATP-binding protein FrcA (260 aa).

Residues 7–251 (LTARGLVKRY…DAVAFMTGAK (245 aa)) form the ABC transporter domain. 39–46 (GDNGAGKS) provides a ligand contact to ATP.

It belongs to the ABC transporter superfamily. In terms of assembly, the complex is composed of two ATP-binding proteins (FrcA), two transmembrane proteins (FrcC) and a solute-binding protein (FrcB).

Its subcellular location is the cell inner membrane. It catalyses the reaction D-fructose(out) + ATP + H2O = D-fructose(in) + ADP + phosphate + H(+). Its function is as follows. Part of the high-affinity ABC transporter complex FrcBCA involved in fructose uptake. Is also a high-affinity transporter for ribose and mannose. Responsible for energy coupling to the transport system. The chain is Fructose import ATP-binding protein FrcA from Rhizobium meliloti (Ensifer meliloti).